We begin with the raw amino-acid sequence, 748 residues long: Adenosylcobalamin-dependent ribonucleoside-triphosphate reductase (748 aa).

Cys-123 and Cys-426 are joined by a disulfide. The interval Ser-151–Met-162 is effector region-1. The interval Thr-172–Val-320 is effector region-2. Residues Cys-415 and Glu-417 contribute to the active site. Residues Phe-572–Val-633 are adenosylcobalamin-binding-1. Positions Phe-692–Glu-733 are adenosylcobalamin-binding-2.

It belongs to the class II ribonucleoside-triphosphate reductase family. In terms of assembly, monomer. The cofactor is adenosylcob(III)alamin.

It carries out the reaction a 2'-deoxyribonucleoside 5'-triphosphate + [thioredoxin]-disulfide + H2O = a ribonucleoside 5'-triphosphate + [thioredoxin]-dithiol. Allosterically regulated by ATP and dNTP. The protein is Adenosylcobalamin-dependent ribonucleoside-triphosphate reductase (rtpR) of Lacticaseibacillus paracasei (strain ATCC 334 / BCRC 17002 / CCUG 31169 / CIP 107868 / KCTC 3260 / NRRL B-441) (Lactobacillus paracasei).